Reading from the N-terminus, the 543-residue chain is Biotinidase (543 aa).

Residues 1-41 (MAHAHIQGGRRAKSRFVVCIMSGARSKLALFLCGCYVVALG) form the signal peptide. Residues 72–351 (NPLALISRQE…VGLIGAENAT (280 aa)) form the CN hydrolase domain. Glutamate 112 acts as the Proton acceptor in catalysis. Asparagine 119 carries an N-linked (GlcNAc...) asparagine glycan. N-linked (GlcNAc...) (complex) asparagine glycosylation is present at asparagine 150. Asparagine 203 is a glycosylation site (N-linked (GlcNAc...) asparagine). Lysine 212 (proton donor) is an active-site residue. Cysteine 245 (nucleophile) is an active-site residue. N-linked (GlcNAc...) asparagine glycans are attached at residues asparagine 349, asparagine 402, and asparagine 489.

This sequence belongs to the carbon-nitrogen hydrolase superfamily. BTD/VNN family.

Its subcellular location is the secreted. The protein localises to the extracellular space. The catalysed reaction is biocytin + H2O = biotin + L-lysine. The enzyme catalyses biotin amide + H2O = biotin + NH4(+). Functionally, catalytic release of biotin from biocytin, the product of biotin-dependent carboxylases degradation. This is Biotinidase from Homo sapiens (Human).